The sequence spans 481 residues: 2-succinylbenzoate--CoA ligase (481 aa).

Belongs to the ATP-dependent AMP-binding enzyme family. MenE subfamily.

The enzyme catalyses 2-succinylbenzoate + ATP + CoA = 2-succinylbenzoyl-CoA + AMP + diphosphate. It functions in the pathway quinol/quinone metabolism; 1,4-dihydroxy-2-naphthoate biosynthesis; 1,4-dihydroxy-2-naphthoate from chorismate: step 5/7. The protein operates within quinol/quinone metabolism; menaquinone biosynthesis. Its function is as follows. Converts 2-succinylbenzoate (OSB) to 2-succinylbenzoyl-CoA (OSB-CoA). This Bacillus cereus (strain ATCC 10987 / NRS 248) protein is 2-succinylbenzoate--CoA ligase.